Reading from the N-terminus, the 172-residue chain is Shikimate kinase (172 aa).

11 to 16 (GTGKTA) contributes to the ATP binding site. T15 lines the Mg(2+) pocket. Substrate is bound by residues D33, R57, and G79. Residue R117 coordinates ATP. A substrate-binding site is contributed by R136.

It belongs to the shikimate kinase family. Monomer. The cofactor is Mg(2+).

It localises to the cytoplasm. It catalyses the reaction shikimate + ATP = 3-phosphoshikimate + ADP + H(+). The protein operates within metabolic intermediate biosynthesis; chorismate biosynthesis; chorismate from D-erythrose 4-phosphate and phosphoenolpyruvate: step 5/7. Its function is as follows. Catalyzes the specific phosphorylation of the 3-hydroxyl group of shikimic acid using ATP as a cosubstrate. The sequence is that of Shikimate kinase from Pelotomaculum thermopropionicum (strain DSM 13744 / JCM 10971 / SI).